A 467-amino-acid chain; its full sequence is ATP synthase subunit beta (467 aa).

150-157 (GGAGVGKT) is an ATP binding site.

This sequence belongs to the ATPase alpha/beta chains family. As to quaternary structure, F-type ATPases have 2 components, CF(1) - the catalytic core - and CF(0) - the membrane proton channel. CF(1) has five subunits: alpha(3), beta(3), gamma(1), delta(1), epsilon(1). CF(0) has three main subunits: a(1), b(2) and c(9-12). The alpha and beta chains form an alternating ring which encloses part of the gamma chain. CF(1) is attached to CF(0) by a central stalk formed by the gamma and epsilon chains, while a peripheral stalk is formed by the delta and b chains.

The protein localises to the cell inner membrane. The catalysed reaction is ATP + H2O + 4 H(+)(in) = ADP + phosphate + 5 H(+)(out). In terms of biological role, produces ATP from ADP in the presence of a proton gradient across the membrane. The catalytic sites are hosted primarily by the beta subunits. The polypeptide is ATP synthase subunit beta (Vibrio cholerae serotype O1 (strain ATCC 39541 / Classical Ogawa 395 / O395)).